A 448-amino-acid polypeptide reads, in one-letter code: tRNA modification GTPase MnmE (448 aa).

R25, E83, and K122 together coordinate (6S)-5-formyl-5,6,7,8-tetrahydrofolate. In terms of domain architecture, TrmE-type G spans 218 to 372; it reads GFKVAIIGKP…LTQKLQKLLD (155 aa). N228 serves as a coordination point for K(+). GTP-binding positions include 228–233, 247–253, and 272–275; these read NTGKSS, SDIAGTT, and DTAG. S232 contributes to the Mg(2+) binding site. 3 residues coordinate K(+): S247, I249, and T252. T253 is a Mg(2+) binding site. K448 contacts (6S)-5-formyl-5,6,7,8-tetrahydrofolate.

The protein belongs to the TRAFAC class TrmE-Era-EngA-EngB-Septin-like GTPase superfamily. TrmE GTPase family. In terms of assembly, homodimer. Heterotetramer of two MnmE and two MnmG subunits. Requires K(+) as cofactor.

Its subcellular location is the cytoplasm. In terms of biological role, exhibits a very high intrinsic GTPase hydrolysis rate. Involved in the addition of a carboxymethylaminomethyl (cmnm) group at the wobble position (U34) of certain tRNAs, forming tRNA-cmnm(5)s(2)U34. The sequence is that of tRNA modification GTPase MnmE from Nitratiruptor sp. (strain SB155-2).